The primary structure comprises 233 residues: Riboflavin kinase (233 aa).

The H-T-H motif-like stretch occupies residues 1–104; sequence MVRDIKTFKF…YKKIFDDEGT (104 aa). The tract at residues 105-233 is riboflavin kinase; that stretch reads IKIKGEVFSG…GDFVEVEVIL (129 aa). A CDP-binding site is contributed by 114 to 119; sequence GVGEGR. The Mg(2+) site is built by Thr143 and Asn145. 2 residues coordinate FMN: Thr200 and Glu208. Residue 213–216 coordinates CDP; sequence VKLR.

This sequence belongs to the archaeal riboflavin kinase family. Mg(2+) serves as cofactor.

It catalyses the reaction riboflavin + CTP = CDP + FMN + H(+). The protein operates within cofactor biosynthesis; FMN biosynthesis; FMN from riboflavin (CTP route): step 1/1. In terms of biological role, catalyzes the CTP-dependent phosphorylation of riboflavin (vitamin B2) to form flavin mononucleotide (FMN). This chain is Riboflavin kinase (ribK), found in Archaeoglobus fulgidus (strain ATCC 49558 / DSM 4304 / JCM 9628 / NBRC 100126 / VC-16).